Here is a 675-residue protein sequence, read N- to C-terminus: PTS system glucose-specific EIICBA component (675 aa).

The region spanning 3 to 414 is the PTS EIIC type-1 domain; the sequence is KKLFGQLQRI…FNFKTPGRED (412 aa). Helical transmembrane passes span 16–36, 59–79, 81–101, 126–146, 173–193, 199–219, 273–293, 303–323, 328–348, 355–375, and 378–398; these read LMLP…GTAF, MMTG…ALGV, IGLA…FIIM, VLGI…GALA, IMMA…WPFI, AFST…FGFI, FMQG…LAIY, VVGG…ITEP, FLFV…LSFL, LHLG…GILP, and TPWW…YVVF. Residues 425–506 form the PTS EIIB type-1 domain; it reads SKLPFDVLDA…ARIMNGDITK (82 aa). The active-site Phosphocysteine intermediate; for EIIB activity is C447. The 105-residue stretch at 547–651 folds into the PTS EIIA type-1 domain; sequence DKVFSEKMMG…SVVTPVIITN (105 aa). Catalysis depends on H599, which acts as the Tele-phosphohistidine intermediate; for EIIA activity.

The protein localises to the cell membrane. It carries out the reaction N(pros)-phospho-L-histidyl-[protein] + D-glucose(out) = D-glucose 6-phosphate(in) + L-histidyl-[protein]. Its function is as follows. The phosphoenolpyruvate-dependent sugar phosphotransferase system (sugar PTS), a major carbohydrate active transport system, catalyzes the phosphorylation of incoming sugar substrates concomitantly with their translocation across the cell membrane. This system is involved in glucose transport. In Staphylococcus haemolyticus (strain JCSC1435), this protein is PTS system glucose-specific EIICBA component (ptsG).